A 1038-amino-acid polypeptide reads, in one-letter code: Rap guanine nucleotide exchange factor 1 (1038 aa).

10-140 (RLSPLHTFSD…DILTDETPSD (131 aa)) lines the a nucleoside 3',5'-cyclic phosphate pocket. The region spanning 234–316 (TDNHQVIRDI…KTNSYYRWVQ (83 aa)) is the DEP domain. 375–492 (ALSHLSTMVK…VRLKDYGEDV (118 aa)) serves as a coordination point for a nucleoside 3',5'-cyclic phosphate. The 139-residue stretch at 516 to 654 (CGYSVMAGKA…DILTRIGSIR (139 aa)) folds into the N-terminal Ras-GEF domain. Residues 795 to 1028 (DSQELAHQLF…MQLSYEIEPK (234 aa)) form the Ras-GEF domain.

As to quaternary structure, interacts (via C-terminus) with drn-1. In terms of tissue distribution, expressed specifically in neurons including the nerve ring, ventral and dorsal nerve cord motor neurons and tail ganglia.

In terms of biological role, guanine nucleotide-releasing protein. Together with GTPase drn-1, may regulate acetylcholine release at the neuromuscular junctions probably downstream of G-protein gsa-1 and adenylate cyclase acy-1. This is Rap guanine nucleotide exchange factor 1 (epac-1) from Caenorhabditis elegans.